The chain runs to 374 residues: Ribosomal RNA large subunit methyltransferase G (374 aa).

The protein belongs to the methyltransferase superfamily. RlmG family.

Its subcellular location is the cytoplasm. It carries out the reaction guanosine(1835) in 23S rRNA + S-adenosyl-L-methionine = N(2)-methylguanosine(1835) in 23S rRNA + S-adenosyl-L-homocysteine + H(+). Its function is as follows. Specifically methylates the guanine in position 1835 (m2G1835) of 23S rRNA. The polypeptide is Ribosomal RNA large subunit methyltransferase G (Pseudomonas syringae pv. syringae (strain B728a)).